The sequence spans 485 residues: Glutamyl-tRNA(Gln) amidotransferase subunit A (485 aa).

Catalysis depends on charge relay system residues K79 and S154. Residue S178 is the Acyl-ester intermediate of the active site.

The protein belongs to the amidase family. GatA subfamily. Heterotrimer of A, B and C subunits.

It carries out the reaction L-glutamyl-tRNA(Gln) + L-glutamine + ATP + H2O = L-glutaminyl-tRNA(Gln) + L-glutamate + ADP + phosphate + H(+). Allows the formation of correctly charged Gln-tRNA(Gln) through the transamidation of misacylated Glu-tRNA(Gln) in organisms which lack glutaminyl-tRNA synthetase. The reaction takes place in the presence of glutamine and ATP through an activated gamma-phospho-Glu-tRNA(Gln). This is Glutamyl-tRNA(Gln) amidotransferase subunit A from Clostridium botulinum (strain Okra / Type B1).